A 186-amino-acid chain; its full sequence is Ribosome-recycling factor (186 aa).

It belongs to the RRF family.

It is found in the cytoplasm. Its function is as follows. Responsible for the release of ribosomes from messenger RNA at the termination of protein biosynthesis. May increase the efficiency of translation by recycling ribosomes from one round of translation to another. This Ralstonia nicotianae (strain ATCC BAA-1114 / GMI1000) (Ralstonia solanacearum) protein is Ribosome-recycling factor.